A 733-amino-acid polypeptide reads, in one-letter code: DNA-binding protein SATB2 (733 aa).

The segment at 1–47 (MERRSESPCLRDSPDRRSGSPDVKGPPPVKVARLEQNGSPMGARGRP) is disordered. S20 carries the post-translational modification Phosphoserine. Residues K24 and K30 each participate in a glycyl lysine isopeptide (Lys-Gly) (interchain with G-Cter in SUMO2) cross-link. The residue at position 39 (S39) is a Phosphoserine. One can recognise a CMP domain in the interval 57–158 (GLMIPVFCVV…VVTLKIQLQS (102 aa)). Residue K161 forms a Glycyl lysine isopeptide (Lys-Gly) (interchain with G-Cter in SUMO2) linkage. The region spanning 161–234 (KLEDLPAEQW…WYKKYKKIKV (74 aa)) is the CUTL domain. K233 participates in a covalent cross-link: Glycyl lysine isopeptide (Lys-Gly) (interchain with G-Cter in SUMO). Residue K350 forms a Glycyl lysine isopeptide (Lys-Gly) (interchain with G-Cter in SUMO); alternate linkage. K350 is covalently cross-linked (Glycyl lysine isopeptide (Lys-Gly) (interchain with G-Cter in SUMO2); alternate). Positions 350–437 (KPEPTNSSVE…ERDRIYQDER (88 aa)) form a DNA-binding region, CUT 1. Positions 435–473 (DERERSMNPNVSMVSSASSSPSSSRTPQAKTSTPTTDLP) are disordered. The segment covering 441–458 (MNPNVSMVSSASSSPSSS) has biased composition (low complexity). A Phosphoserine modification is found at S454. A compositionally biased stretch (polar residues) spans 459 to 470 (RTPQAKTSTPTT). T467 is modified (phosphothreonine). Positions 473–560 (PIKVDGANVN…ERDVIYEEES (88 aa)) form a DNA-binding region, CUT 2. K475 is covalently cross-linked (Glycyl lysine isopeptide (Lys-Gly) (interchain with G-Cter in SUMO2)). Disordered regions lie at residues 580–617 (QVLH…KPRS) and 691–733 (DEEL…TDQR). A Phosphoserine modification is found at S594. Positions 615–674 (PRSRTKISLEALGILQSFIHDVGLYPDQEAIHTLSAQLDLPKHTIIKFFQNQRYHVKHHG) form a DNA-binding region, homeobox. A compositionally biased stretch (acidic residues) spans 694–708 (LLTESEENDSEEGSE). A compositionally biased stretch (basic and acidic residues) spans 709–733 (EMYKVEAEEENADKSKAAPAETDQR). K724 participates in a covalent cross-link: Glycyl lysine isopeptide (Lys-Gly) (interchain with G-Cter in SUMO2).

The protein belongs to the CUT homeobox family. In terms of assembly, interacts with PIAS1. Interacts with ATF4 and RUNX2; resulting in enhanced DNA binding and transactivation by these transcription factors. Post-translationally, sumoylated by PIAS1. Sumoylation promotes nuclear localization, but represses transcription factor activity. In terms of tissue distribution, expressed in cortical neurons that extend axons across the corpus callosum. Also expressed in branchial arches and in cells of the osteoblast lineage, but not in chondrocytes and osteoclasts.

It is found in the nucleus matrix. Its function is as follows. Binds to DNA, at nuclear matrix- or scaffold-associated regions. Thought to recognize the sugar-phosphate structure of double-stranded DNA. Transcription factor controlling nuclear gene expression, by binding to matrix attachment regions (MARs) of DNA and inducing a local chromatin-loop remodeling. Acts as a docking site for several chromatin remodeling enzymes and also by recruiting corepressors (HDACs) or coactivators (HATs) directly to promoters and enhancers. Required for the initiation of the upper-layer neurons (UL1) specific genetic program and for the inactivation of deep-layer neurons (DL) and UL2 specific genes, probably by modulating Bcl11b expression. Repressor of Ctip2 and regulatory determinant of corticocortical connections in the developing cerebral cortex. May play an important role in palate formation. Acts as a molecular node in a transcriptional network regulating skeletal development and osteoblast differentiation. The polypeptide is DNA-binding protein SATB2 (Satb2) (Mus musculus (Mouse)).